Here is a 40-residue protein sequence, read N- to C-terminus: Photosystem II reaction center protein Y (40 aa).

The helical transmembrane segment at 5–23 (LIVVLAPILLAGGWAVFNI) threads the bilayer.

Belongs to the PsbY family. As to quaternary structure, PSII is composed of 1 copy each of membrane proteins PsbA, PsbB, PsbC, PsbD, PsbE, PsbF, PsbH, PsbI, PsbJ, PsbK, PsbL, PsbM, PsbT, PsbX, PsbY, PsbZ, Psb30/Ycf12, peripheral proteins PsbO, CyanoQ (PsbQ), PsbU, PsbV and a large number of cofactors. It forms dimeric complexes.

The protein resides in the cellular thylakoid membrane. In terms of biological role, loosely associated component of the core of photosystem II (PSII), it is not always seen in crystals. PSII is a light-driven water plastoquinone oxidoreductase, using light energy to abstract electrons from H(2)O, generating a proton gradient subsequently used for ATP formation. In Synechococcus elongatus (strain ATCC 33912 / PCC 7942 / FACHB-805) (Anacystis nidulans R2), this protein is Photosystem II reaction center protein Y.